The primary structure comprises 323 residues: Zinc finger C2HC domain-containing protein 1A (323 aa).

A C2HC/C3H-type 1 zinc finger spans residues 7 to 36 (ELRPCKICGRTFFPATLKKHVPICQKTSVK). Residues Cys11, Cys14, His26, and Cys30 each contribute to the Zn(2+) site. The tract at residues 35 to 75 (VKKRKTFESSRQRAEGTDINTVKPVKPRPEPPKKQSNWKRK) is disordered. Positions 40–50 (TFESSRQRAEG) are enriched in basic and acidic residues. The C2HC/C3H-type 2 zinc finger occupies 110 to 139 (DYVQCPYCQRRFNQNAADRHINFCKEQSAR). The Zn(2+) site is built by Cys114, Cys117, His129, and Cys133. Residues 138–273 (ARMGQKIKGG…EAAMGYDSSD (136 aa)) form a disordered region. A compositionally biased stretch (polar residues) spans 208 to 226 (KYQTQSPAHKNSTMVTSPQ).

This sequence belongs to the ZC2HC1 family. Zn(2+) is required as a cofactor.

This Xenopus laevis (African clawed frog) protein is Zinc finger C2HC domain-containing protein 1A (zc2hc1a).